A 57-amino-acid chain; its full sequence is Conotoxin reg3.17 (57 aa).

Residues Thr-1–Gly-16 form the signal peptide. A propeptide spanning residues Asp-17–Gln-44 is cleaved from the precursor. 3 cysteine pairs are disulfide-bonded: Cys-45–Cys-57, Cys-46–Cys-53, and Cys-50–Cys-56.

Belongs to the conotoxin M superfamily. As to expression, expressed by the venom duct.

It localises to the secreted. This is Conotoxin reg3.17 from Conus regius (Crown cone).